The chain runs to 456 residues: Bifunctional protein GlmU (456 aa).

The segment at methionine 1–arginine 229 is pyrophosphorylase. UDP-N-acetyl-alpha-D-glucosamine is bound by residues leucine 11–glycine 14, lysine 25, glutamine 76, glycine 81–threonine 82, tyrosine 103–aspartate 105, glycine 140, glutamate 154, asparagine 169, and asparagine 227. Aspartate 105 serves as a coordination point for Mg(2+). Asparagine 227 serves as a coordination point for Mg(2+). The segment at leucine 230–alanine 250 is linker. An N-acetyltransferase region spans residues glycine 251–lysine 456. Arginine 333 and lysine 351 together coordinate UDP-N-acetyl-alpha-D-glucosamine. Histidine 363 acts as the Proton acceptor in catalysis. UDP-N-acetyl-alpha-D-glucosamine-binding residues include tyrosine 366 and asparagine 377. Residues alanine 380, asparagine 386–tyrosine 387, serine 405, alanine 423, and arginine 440 contribute to the acetyl-CoA site.

It in the N-terminal section; belongs to the N-acetylglucosamine-1-phosphate uridyltransferase family. In the C-terminal section; belongs to the transferase hexapeptide repeat family. As to quaternary structure, homotrimer. It depends on Mg(2+) as a cofactor.

The protein localises to the cytoplasm. The enzyme catalyses alpha-D-glucosamine 1-phosphate + acetyl-CoA = N-acetyl-alpha-D-glucosamine 1-phosphate + CoA + H(+). The catalysed reaction is N-acetyl-alpha-D-glucosamine 1-phosphate + UTP + H(+) = UDP-N-acetyl-alpha-D-glucosamine + diphosphate. The protein operates within nucleotide-sugar biosynthesis; UDP-N-acetyl-alpha-D-glucosamine biosynthesis; N-acetyl-alpha-D-glucosamine 1-phosphate from alpha-D-glucosamine 6-phosphate (route II): step 2/2. It participates in nucleotide-sugar biosynthesis; UDP-N-acetyl-alpha-D-glucosamine biosynthesis; UDP-N-acetyl-alpha-D-glucosamine from N-acetyl-alpha-D-glucosamine 1-phosphate: step 1/1. Its pathway is bacterial outer membrane biogenesis; LPS lipid A biosynthesis. In terms of biological role, catalyzes the last two sequential reactions in the de novo biosynthetic pathway for UDP-N-acetylglucosamine (UDP-GlcNAc). The C-terminal domain catalyzes the transfer of acetyl group from acetyl coenzyme A to glucosamine-1-phosphate (GlcN-1-P) to produce N-acetylglucosamine-1-phosphate (GlcNAc-1-P), which is converted into UDP-GlcNAc by the transfer of uridine 5-monophosphate (from uridine 5-triphosphate), a reaction catalyzed by the N-terminal domain. The chain is Bifunctional protein GlmU from Shigella sonnei (strain Ss046).